Reading from the N-terminus, the 400-residue chain is Phosphoglycerate kinase (400 aa).

Residues 23–25 (DLN), R38, 61–64 (HFGR), R120, and R153 each bind substrate. ATP is bound by residues K203, E325, and 355 to 358 (GGDT).

The protein belongs to the phosphoglycerate kinase family. In terms of assembly, monomer.

It is found in the cytoplasm. It carries out the reaction (2R)-3-phosphoglycerate + ATP = (2R)-3-phospho-glyceroyl phosphate + ADP. Its pathway is carbohydrate degradation; glycolysis; pyruvate from D-glyceraldehyde 3-phosphate: step 2/5. The sequence is that of Phosphoglycerate kinase from Agrobacterium fabrum (strain C58 / ATCC 33970) (Agrobacterium tumefaciens (strain C58)).